The following is a 228-amino-acid chain: UPF0502 protein Rfer_1648 (228 aa).

It belongs to the UPF0502 family.

This chain is UPF0502 protein Rfer_1648, found in Albidiferax ferrireducens (strain ATCC BAA-621 / DSM 15236 / T118) (Rhodoferax ferrireducens).